Consider the following 219-residue polypeptide: uncharacterized protein (219 aa).

5 consecutive transmembrane segments (helical) span residues 14–34, 37–57, 123–143, 155–175, and 189–209; these read LVYSFPIVMAYIPVAFTFGVL, TLGFSEVEAMLASLLIFAGAS, FLLGLELGSYSAWVGGTALGV, VYSALVFSISALFLVLLLPNL, and VALAFHLLNLTSVGIIAAALA.

This sequence belongs to the AzlC family.

The protein localises to the cell membrane. This is an uncharacterized protein from Archaeoglobus fulgidus (strain ATCC 49558 / DSM 4304 / JCM 9628 / NBRC 100126 / VC-16).